We begin with the raw amino-acid sequence, 361 residues long: Histidinol-phosphate aminotransferase (361 aa).

Position 224 is an N6-(pyridoxal phosphate)lysine (lysine 224).

It belongs to the class-II pyridoxal-phosphate-dependent aminotransferase family. Histidinol-phosphate aminotransferase subfamily. Homodimer. Pyridoxal 5'-phosphate serves as cofactor.

It carries out the reaction L-histidinol phosphate + 2-oxoglutarate = 3-(imidazol-4-yl)-2-oxopropyl phosphate + L-glutamate. It participates in amino-acid biosynthesis; L-histidine biosynthesis; L-histidine from 5-phospho-alpha-D-ribose 1-diphosphate: step 7/9. This Limosilactobacillus fermentum (strain NBRC 3956 / LMG 18251) (Lactobacillus fermentum) protein is Histidinol-phosphate aminotransferase.